Here is a 236-residue protein sequence, read N- to C-terminus: MATPHINAVPGAFAETMLFPGDPLRAKYIAETFLENVEQVTDVRNMLGFTGTYKGKRISVMGSGMGIPSASIYAYELIKEYGVKNLIRVGTCGAISTDVKVRDVIIAMGACTDSKVNRLRFKDHDFAAIADYSLLSAVVDSAKEHGTQIRVGNVFSADLFYTPDPQMFDVMEKMGVLGVEMEAAGLYGVAHELGAKALCVVTVSDHIRTGEKTTSDERQTTFNDMIIMTLDAAITL.

His-5 contributes to the a purine D-ribonucleoside binding site. Residues Gly-21, Arg-25, Arg-44, and 88–91 contribute to the phosphate site; that span reads RVGT. A purine D-ribonucleoside contacts are provided by residues 180–182 and 204–205; these read EME and SD. The Proton donor role is filled by Asp-205.

Belongs to the PNP/UDP phosphorylase family. In terms of assembly, homohexamer; trimer of homodimers.

It catalyses the reaction a purine D-ribonucleoside + phosphate = a purine nucleobase + alpha-D-ribose 1-phosphate. The catalysed reaction is a purine 2'-deoxy-D-ribonucleoside + phosphate = a purine nucleobase + 2-deoxy-alpha-D-ribose 1-phosphate. Catalyzes the reversible phosphorolytic breakdown of the N-glycosidic bond in the beta-(deoxy)ribonucleoside molecules, with the formation of the corresponding free purine bases and pentose-1-phosphate. The sequence is that of Purine nucleoside phosphorylase DeoD-type from Shewanella denitrificans (strain OS217 / ATCC BAA-1090 / DSM 15013).